The chain runs to 484 residues: ATP synthase subunit beta (484 aa).

162–169 (GGAGVGKT) lines the ATP pocket.

Belongs to the ATPase alpha/beta chains family. As to quaternary structure, F-type ATPases have 2 components, CF(1) - the catalytic core - and CF(0) - the membrane proton channel. CF(1) has five subunits: alpha(3), beta(3), gamma(1), delta(1), epsilon(1). CF(0) has four main subunits: a(1), b(1), b'(1) and c(9-12).

It localises to the cellular thylakoid membrane. It carries out the reaction ATP + H2O + 4 H(+)(in) = ADP + phosphate + 5 H(+)(out). Produces ATP from ADP in the presence of a proton gradient across the membrane. The catalytic sites are hosted primarily by the beta subunits. The chain is ATP synthase subunit beta from Synechococcus elongatus (strain ATCC 33912 / PCC 7942 / FACHB-805) (Anacystis nidulans R2).